The following is a 1249-amino-acid chain: Apoptotic protease-activating factor 1 (1249 aa).

The 90-residue stretch at 1-90 folds into the CARD domain; that stretch reads MDAKARNCLL…KDLAALLQSG (90 aa). The NB-ARC domain occupies 106-415; sequence ITSFVRTVLC…LETEEVEDIL (310 aa). ATP is bound by residues 154–161 and R265; that span reads GMAGCGKS. A WD 1-1 repeat occupies 613 to 652; sequence PHTDAVYHACFSQDGQRIASCGADKTLQVFKAETGEKLLD. Residues 655 to 694 form a WD 1-2 repeat; it reads AHEDEVLCCAFSSDDSYIATCSADKKVKIWDSATGKLVHT. The stretch at 697-738 is one WD 1-3 repeat; that stretch reads EHSEQVNCCHFTNKSNHLLLATGSNDFFLKLWDLNQKECRNT. Residues 741-780 form a WD 1-4 repeat; that stretch reads GHTNSVNHCRFSPDDELLASCSADGTLRLWDVRSANERKS. One copy of the WD 1-5 repeat lies at 796–837; the sequence is DVEVIVKCCSWSADGDKIIVAAKNKVLLFDIHTSGLLAEIHT. One copy of the WD 1-6 repeat lies at 838–877; sequence GHHSTIQYCDFSPYDHLAVIALSQYCVELWNIDSRLKVAD. Residues 880–910 form a WD 1-7 repeat; sequence GHLSWVHGVMFSPDGSSFLTASDDQTIRVWE. Residues 910–921 form an interpropeller linker region; the sequence is ETKKVCKNSAIV. The WD 2-1 repeat unit spans residues 922–958; it reads LKQEIDVVFQENETMVLAVDNIRGLQLIAGKTGQIDY. The WD 2-2 repeat unit spans residues 959–998; the sequence is LPEAQVSCCCLSPHLEYVAFGDEDGAIKIIELPNNRVFSS. One copy of the WD 2-3 repeat lies at 1001–1040; the sequence is GHKKAVRHIQFTADGKTLISSSEDSVIQVWNWQTGDYVFL. Residues 1042–1080 form a WD 2-4 repeat; sequence AHQETVKDFRLLQDSRLLSWSFDGTVKVWNVITGRIERD. Residues 1083 to 1122 form a WD 2-5 repeat; the sequence is CHQGTVLSCAISSDATKFSSTSADKTAKIWSFDLLSPLHE. A WD 2-6 repeat occupies 1125–1164; it reads GHNGCVRCSAFSLDGILLATGDDNGEIRIWNVSDGQLLHS. One copy of the WD 2-7 repeat lies at 1176–1213; that stretch reads THGGWVTDVCFSPDSKTLVSAGGYLKWWNVATGDSSQT. Residues 1214 to 1249 form a WD 2-8 repeat; that stretch reads FYTNGTNLKKIHVSPDFRTYVTVDNLGILYILQVLE.

As to quaternary structure, monomer. Oligomerizes to a heptameric ring, known as the apoptosome, upon binding of cytochrome c and dATP. Oligomeric Apaf-1 and pro-caspase-9 bind to each other via their respective NH2-terminal CARD domains and consecutively mature caspase-9 is released from the complex. Interacts with UACA. It may also interact with Bcl-XL. Interacts with APIP. Interacts (via CARD and NACHT domains) with NAIP/BIRC1 (via NACHT domain). Interacts with CIAO2A. Highly expressed in lung and spleen, weakly in brain and kidney and not detectable in liver.

It is found in the cytoplasm. Its function is as follows. Oligomeric Apaf-1 mediates the cytochrome c-dependent autocatalytic activation of pro-caspase-9 (Apaf-3), leading to the activation of caspase-3 and apoptosis. This activation requires ATP. The chain is Apoptotic protease-activating factor 1 (Apaf1) from Mus musculus (Mouse).